Here is a 348-residue protein sequence, read N- to C-terminus: Cylicin-2 (348 aa).

The segment at 25-347 (KKSWNQQHFA…DEKKDAKKKG (323 aa)) is 31 X 3 AA repeats of K-K-X. 2 disordered regions span residues 35-59 (LLFPKPQRPGTKRRSKPSQIRDNTV) and 101-348 (PTRT…KKGK). Basic and acidic residues-rich tracts occupy residues 103–159 (RTVE…DAKK), 166–217 (KDAE…EKDS), 238–267 (KADEKKDEDGKKDANKGDESKDAKKDAKEI), and 276–342 (KPSS…EKKD). Repeat copies occupy residues 157–184 (AKKDSKKGKKDAEKGKDSATESEDEKGG), 185–212 (AKKDNKKDKKDSNKGKDSATESEGEKGG), and 213–240 (TEKDSKKGKKDSKKGKDSAIELQAVKAD). The tract at residues 157–240 (AKKDSKKGKK…AIELQAVKAD (84 aa)) is 3 X approximate tandem repeats.

In terms of tissue distribution, testis.

The protein localises to the cytoplasm. It is found in the cytoskeleton. Its subcellular location is the perinuclear theca. The protein resides in the calyx. Functionally, plays a role in the establishment of normal sperm morphology during spermatogenesis. It is required for acrosome attachment to the nuclear envelope, and proper manchette elongation and disassembly. This is Cylicin-2 (CYLC2) from Homo sapiens (Human).